Here is a 352-residue protein sequence, read N- to C-terminus: Photosystem II protein D1 (352 aa).

Position 2 is an N-acetylthreonine (Thr2). A Phosphothreonine modification is found at Thr2. The next 3 membrane-spanning stretches (helical) occupy residues 29-46 (YIGW…TATS), 118-133 (HFLL…EWEL), and 142-156 (WIAV…AASA). Residue His118 participates in chlorophyll a binding. Tyr126 provides a ligand contact to pheophytin a. Positions 170 and 189 each coordinate [CaMn4O5] cluster. Residues 197–218 (FHMLGVAGVFGGSLFSAMHGSL) form a helical membrane-spanning segment. His198 contributes to the chlorophyll a binding site. Residues His215 and 264–265 (SF) contribute to the a quinone site. Position 215 (His215) interacts with Fe cation. Position 272 (His272) interacts with Fe cation. Residues 274–288 (FLAAWPVIGIWFTAL) form a helical membrane-spanning segment. [CaMn4O5] cluster is bound by residues His332, Glu333, Asp342, and Ala344. The propeptide occupies 345-352 (STNSSSNN).

It belongs to the reaction center PufL/M/PsbA/D family. As to quaternary structure, PSII is composed of 1 copy each of membrane proteins PsbA, PsbB, PsbC, PsbD, PsbE, PsbF, PsbH, PsbI, PsbJ, PsbK, PsbL, PsbM, PsbT, PsbX, PsbY, PsbZ, Psb30/Ycf12, at least 3 peripheral proteins of the oxygen-evolving complex and a large number of cofactors. It forms dimeric complexes. The D1/D2 heterodimer binds P680, chlorophylls that are the primary electron donor of PSII, and subsequent electron acceptors. It shares a non-heme iron and each subunit binds pheophytin, quinone, additional chlorophylls, carotenoids and lipids. D1 provides most of the ligands for the Mn4-Ca-O5 cluster of the oxygen-evolving complex (OEC). There is also a Cl(-1) ion associated with D1 and D2, which is required for oxygen evolution. The PSII complex binds additional chlorophylls, carotenoids and specific lipids. serves as cofactor. Tyr-161 forms a radical intermediate that is referred to as redox-active TyrZ, YZ or Y-Z. In terms of processing, C-terminally processed by CTPA; processing is essential to allow assembly of the oxygen-evolving complex and thus photosynthetic growth.

It is found in the plastid. The protein localises to the chloroplast thylakoid membrane. The enzyme catalyses 2 a plastoquinone + 4 hnu + 2 H2O = 2 a plastoquinol + O2. Functionally, this is one of the two reaction center proteins of photosystem II. In terms of biological role, photosystem II (PSII) is a light-driven water:plastoquinone oxidoreductase that uses light energy to abstract electrons from H(2)O, generating O(2) and a proton gradient subsequently used for ATP formation. It consists of a core antenna complex that captures photons, and an electron transfer chain that converts photonic excitation into a charge separation. The D1/D2 (PsbA/PsbD) reaction center heterodimer binds P680, the primary electron donor of PSII as well as several subsequent electron acceptors. This is Photosystem II protein D1 from Chlamydomonas reinhardtii (Chlamydomonas smithii).